The chain runs to 547 residues: Cilia- and flagella- associated protein 210 (547 aa).

Coiled coils occupy residues 50 to 131 (ERIR…RKKA), 183 to 251 (VKLN…MKKN), and 342 to 405 (IARD…KADK). A disordered region spans residues 214–237 (KQIEEHKEEEEARKKSEEKDAEEM).

Microtubule inner protein component of sperm flagellar doublet microtubules.

The protein resides in the cytoplasm. The protein localises to the cytoskeleton. It localises to the cilium axoneme. Its subcellular location is the flagellum axoneme. Its function is as follows. Microtubule inner protein (MIP) part of the dynein-decorated doublet microtubules (DMTs) in cilia axoneme, which is required for motile cilia beating. The protein is Cilia- and flagella- associated protein 210 (Cfap210) of Mus musculus (Mouse).